The sequence spans 234 residues: Leucyl/phenylalanyl-tRNA--protein transferase (234 aa).

The protein belongs to the L/F-transferase family.

It localises to the cytoplasm. It catalyses the reaction N-terminal L-lysyl-[protein] + L-leucyl-tRNA(Leu) = N-terminal L-leucyl-L-lysyl-[protein] + tRNA(Leu) + H(+). The catalysed reaction is N-terminal L-arginyl-[protein] + L-leucyl-tRNA(Leu) = N-terminal L-leucyl-L-arginyl-[protein] + tRNA(Leu) + H(+). It carries out the reaction L-phenylalanyl-tRNA(Phe) + an N-terminal L-alpha-aminoacyl-[protein] = an N-terminal L-phenylalanyl-L-alpha-aminoacyl-[protein] + tRNA(Phe). In terms of biological role, functions in the N-end rule pathway of protein degradation where it conjugates Leu, Phe and, less efficiently, Met from aminoacyl-tRNAs to the N-termini of proteins containing an N-terminal arginine or lysine. The polypeptide is Leucyl/phenylalanyl-tRNA--protein transferase (Klebsiella pneumoniae (strain 342)).